Here is a 398-residue protein sequence, read N- to C-terminus: Histidinol-phosphate aminotransferase (398 aa).

Polar residues predominate over residues 1–10 (MTGQRATPQP). Residues 1–30 (MTGQRATPQPTLDDLPLRDDLRGKSPYGAP) are disordered. An N6-(pyridoxal phosphate)lysine modification is found at Lys-234.

The protein belongs to the class-II pyridoxal-phosphate-dependent aminotransferase family. Histidinol-phosphate aminotransferase subfamily. In terms of assembly, homodimer. Requires pyridoxal 5'-phosphate as cofactor.

The enzyme catalyses L-histidinol phosphate + 2-oxoglutarate = 3-(imidazol-4-yl)-2-oxopropyl phosphate + L-glutamate. Its pathway is amino-acid biosynthesis; L-histidine biosynthesis; L-histidine from 5-phospho-alpha-D-ribose 1-diphosphate: step 7/9. The chain is Histidinol-phosphate aminotransferase from Mycobacterium avium (strain 104).